Here is a 258-residue protein sequence, read N- to C-terminus: Imidazole glycerol phosphate synthase subunit HisF (258 aa).

Active-site residues include D11 and D130.

Belongs to the HisA/HisF family. As to quaternary structure, heterodimer of HisH and HisF.

Its subcellular location is the cytoplasm. The catalysed reaction is 5-[(5-phospho-1-deoxy-D-ribulos-1-ylimino)methylamino]-1-(5-phospho-beta-D-ribosyl)imidazole-4-carboxamide + L-glutamine = D-erythro-1-(imidazol-4-yl)glycerol 3-phosphate + 5-amino-1-(5-phospho-beta-D-ribosyl)imidazole-4-carboxamide + L-glutamate + H(+). The protein operates within amino-acid biosynthesis; L-histidine biosynthesis; L-histidine from 5-phospho-alpha-D-ribose 1-diphosphate: step 5/9. Functionally, IGPS catalyzes the conversion of PRFAR and glutamine to IGP, AICAR and glutamate. The HisF subunit catalyzes the cyclization activity that produces IGP and AICAR from PRFAR using the ammonia provided by the HisH subunit. The protein is Imidazole glycerol phosphate synthase subunit HisF of Prochlorococcus marinus (strain MIT 9211).